A 326-amino-acid polypeptide reads, in one-letter code: DNA-directed RNA polymerase subunit alpha (326 aa).

Residues 1 to 231 (MQTNLLKPKI…DQLVVFAALE (231 aa)) are alpha N-terminal domain (alpha-NTD). Residues 247–326 (VDPMLMRPVD…ESWPPANLEK (80 aa)) form an alpha C-terminal domain (alpha-CTD) region.

It belongs to the RNA polymerase alpha chain family. Homodimer. The RNAP catalytic core consists of 2 alpha, 1 beta, 1 beta' and 1 omega subunit. When a sigma factor is associated with the core the holoenzyme is formed, which can initiate transcription.

The catalysed reaction is RNA(n) + a ribonucleoside 5'-triphosphate = RNA(n+1) + diphosphate. Functionally, DNA-dependent RNA polymerase catalyzes the transcription of DNA into RNA using the four ribonucleoside triphosphates as substrates. This chain is DNA-directed RNA polymerase subunit alpha, found in Polynucleobacter necessarius subsp. necessarius (strain STIR1).